The following is a 382-amino-acid chain: Dual-specificity RNA methyltransferase RlmN (382 aa).

Glu-96 serves as the catalytic Proton acceptor. The region spanning 102–342 is the Radical SAM core domain; it reads QGKRGTLCVS…VRTTRGEDID (241 aa). An intrachain disulfide couples Cys-109 to Cys-345. [4Fe-4S] cluster is bound by residues Cys-116, Cys-120, and Cys-123. Residues 170–171, Ser-202, 224–226, and Asn-302 contribute to the S-adenosyl-L-methionine site; these read GE and SLH. Cys-345 acts as the S-methylcysteine intermediate in catalysis.

It belongs to the radical SAM superfamily. RlmN family. [4Fe-4S] cluster is required as a cofactor.

The protein localises to the cytoplasm. It catalyses the reaction adenosine(2503) in 23S rRNA + 2 reduced [2Fe-2S]-[ferredoxin] + 2 S-adenosyl-L-methionine = 2-methyladenosine(2503) in 23S rRNA + 5'-deoxyadenosine + L-methionine + 2 oxidized [2Fe-2S]-[ferredoxin] + S-adenosyl-L-homocysteine. It carries out the reaction adenosine(37) in tRNA + 2 reduced [2Fe-2S]-[ferredoxin] + 2 S-adenosyl-L-methionine = 2-methyladenosine(37) in tRNA + 5'-deoxyadenosine + L-methionine + 2 oxidized [2Fe-2S]-[ferredoxin] + S-adenosyl-L-homocysteine. In terms of biological role, specifically methylates position 2 of adenine 2503 in 23S rRNA and position 2 of adenine 37 in tRNAs. m2A2503 modification seems to play a crucial role in the proofreading step occurring at the peptidyl transferase center and thus would serve to optimize ribosomal fidelity. The sequence is that of Dual-specificity RNA methyltransferase RlmN from Pseudomonas syringae pv. syringae (strain B728a).